Here is a 188-residue protein sequence, read N- to C-terminus: Adrenodoxin, mitochondrial (188 aa).

A mitochondrion-targeting transit peptide spans 1 to 64; it reads MAAAPGARLL…RPLSVSARAR (64 aa). Ser-67 carries the phosphoserine modification. A 2Fe-2S ferredoxin-type domain is found at 69-175; sequence DKVTVHFKNR…NMTVRVPEAV (107 aa). Lys-70 carries the post-translational modification N6-acetyllysine; alternate. The residue at position 70 (Lys-70) is an N6-succinyllysine; alternate. The [2Fe-2S] cluster site is built by Cys-110, Cys-116, Cys-119, and Cys-156. N6-succinyllysine is present on Lys-162. Position 181 is a phosphoserine (Ser-181).

The protein belongs to the adrenodoxin/putidaredoxin family. Interacts with CYP11A1. Requires [2Fe-2S] cluster as cofactor. As to expression, found in all tissues, most abundant in adrenals, ovaries and testes.

The protein localises to the mitochondrion matrix. Its function is as follows. Essential for the synthesis of various steroid hormones. Participates in the reduction of mitochondrial cytochrome P450 for steroidogenesis. Transfers electrons from adrenodoxin reductase to CYP11A1, a cytochrome P450 that catalyzes cholesterol side-chain cleavage. Does not form a ternary complex with adrenodoxin reductase and CYP11A1 but shuttles between the two enzymes to transfer electrons. In Rattus norvegicus (Rat), this protein is Adrenodoxin, mitochondrial (Fdx1).